The sequence spans 437 residues: 3-phosphoshikimate 1-carboxyvinyltransferase (437 aa).

Lys22, Ser23, and Arg27 together coordinate 3-phosphoshikimate. Residue Lys22 participates in phosphoenolpyruvate binding. Gly96 and Arg125 together coordinate phosphoenolpyruvate. Residues Ser170, Gln172, Asp323, and Lys350 each contribute to the 3-phosphoshikimate site. Residue Gln172 coordinates phosphoenolpyruvate. The active-site Proton acceptor is Asp323. The phosphoenolpyruvate site is built by Arg354 and Arg396.

The protein belongs to the EPSP synthase family. Monomer.

It localises to the cytoplasm. The enzyme catalyses 3-phosphoshikimate + phosphoenolpyruvate = 5-O-(1-carboxyvinyl)-3-phosphoshikimate + phosphate. The protein operates within metabolic intermediate biosynthesis; chorismate biosynthesis; chorismate from D-erythrose 4-phosphate and phosphoenolpyruvate: step 6/7. Its function is as follows. Catalyzes the transfer of the enolpyruvyl moiety of phosphoenolpyruvate (PEP) to the 5-hydroxyl of shikimate-3-phosphate (S3P) to produce enolpyruvyl shikimate-3-phosphate and inorganic phosphate. This chain is 3-phosphoshikimate 1-carboxyvinyltransferase, found in Synechococcus sp. (strain RCC307).